Consider the following 459-residue polypeptide: Cysteine--tRNA ligase (459 aa).

Cys28 lines the Zn(2+) pocket. Residues 30 to 40 (VTIYDLCHIGH) carry the 'HIGH' region motif. Positions 209, 234, and 238 each coordinate Zn(2+). The 'KMSKS' region motif lies at 266–270 (KMSKS). An ATP-binding site is contributed by Lys269.

It belongs to the class-I aminoacyl-tRNA synthetase family. As to quaternary structure, monomer. It depends on Zn(2+) as a cofactor.

The protein localises to the cytoplasm. The enzyme catalyses tRNA(Cys) + L-cysteine + ATP = L-cysteinyl-tRNA(Cys) + AMP + diphosphate. The chain is Cysteine--tRNA ligase from Shewanella baltica (strain OS195).